The primary structure comprises 366 residues: UPF0324 membrane protein RSc1111 (366 aa).

A run of 8 helical transmembrane segments spans residues 21–43 (LAGA…TAWA), 103–125 (LGAS…GAWV), 137–159 (AVLV…APAV), 169–191 (AIAS…YALA), 198–220 (VAPA…VIAA), 240–262 (VLAL…LVLE), 283–305 (WFAA…ATWH), and 343–365 (AGVL…RWLA).

It belongs to the UPF0324 family.

The protein resides in the cell membrane. The chain is UPF0324 membrane protein RSc1111 from Ralstonia nicotianae (strain ATCC BAA-1114 / GMI1000) (Ralstonia solanacearum).